Consider the following 266-residue polypeptide: Chymotrypsin-like elastase family member 1 (266 aa).

A signal peptide spans 1–16 (MLRFLVFASLVLCGHS). The propeptide at 17–26 (TEDVPETDAR) is activation peptide. Residues 27–264 (VVGGAEARRN…YISWMNNVIA (238 aa)) enclose the Peptidase S1 domain. A disulfide bridge connects residues C56 and C72. The active-site Charge relay system is the H71. Positions 85, 87, 90, and 95 each coordinate Ca(2+). N87 carries N-linked (GlcNAc...) asparagine glycosylation. D119 (charge relay system) is an active-site residue. Cystine bridges form between C153–C220, C184–C200, and C210–C240. S214 acts as the Charge relay system in catalysis.

This sequence belongs to the peptidase S1 family. Elastase subfamily. Ca(2+) serves as cofactor.

It localises to the secreted. The enzyme catalyses Hydrolysis of proteins, including elastin. Preferential cleavage: Ala-|-Xaa.. Serine proteases that hydrolyze many proteins in addition to elastin. The protein is Chymotrypsin-like elastase family member 1 (Cela1) of Mus musculus (Mouse).